Reading from the N-terminus, the 834-residue chain is Pentatricopeptide repeat-containing protein At4g39530 (834 aa).

PPR repeat units follow at residues 78–112 (DTYL…NLVS), 113–144 (WSTM…KDSP), 145–181 (NEYI…GFDR), 182–212 (DVYV…LPEK), 213–247 (STVT…NVVP), 248–282 (DGYI…GLEM), 283–313 (DASL…MPNK), 314–348 (NIIS…GLKP), 349–383 (DMYA…NLGN), 384–414 (DSYV…FAAA), 415–452 (DVVL…LIRP), 453–487 (SLLT…GLNL), 488–518 (DIFA…MKVK), 519–553 (DLVI…RERP), 554–588 (DEFT…GLEC), 589–619 (NPYI…AASR), 620–654 (DVVC…GIEP), 655–689 (NYIT…GIEP), and 690–720 (ETEH…MPTK). The interval 725-800 (VWRSLLSGCA…EPGRSWIGIN (76 aa)) is type E motif. Residues 801-831 (KEVHIFLSKDKSHCKANQIYEVLDDLLVQIR) form a type E(+) motif region.

It belongs to the PPR family. PCMP-E subfamily.

The protein is Pentatricopeptide repeat-containing protein At4g39530 (PCMP-E52) of Arabidopsis thaliana (Mouse-ear cress).